The sequence spans 241 residues: Probable pectate lyase D (241 aa).

Positions 1–17 are cleaved as a signal peptide; that stretch reads MYQKSLLFSLLATSALA. N215 carries an N-linked (GlcNAc...) asparagine glycan. The disordered stretch occupies residues 215–241; the sequence is NNSGDEPEEVSEGPSDACQYSEPLSSC.

The protein belongs to the polysaccharide lyase 3 family. The cofactor is Ca(2+).

It localises to the secreted. It catalyses the reaction Eliminative cleavage of (1-&gt;4)-alpha-D-galacturonan to give oligosaccharides with 4-deoxy-alpha-D-galact-4-enuronosyl groups at their non-reducing ends.. Pectinolytic enzyme consist of four classes of enzymes: pectin lyase, polygalacturonase, pectin methylesterase and rhamnogalacturonase. Among pectinolytic enzymes, pectin lyase is the most important in depolymerization of pectin, since it cleaves internal glycosidic bonds of highly methylated pectins. Favors pectate, the anion, over pectin, the methyl ester. The sequence is that of Probable pectate lyase D (plyD) from Neosartorya fischeri (strain ATCC 1020 / DSM 3700 / CBS 544.65 / FGSC A1164 / JCM 1740 / NRRL 181 / WB 181) (Aspergillus fischerianus).